The chain runs to 405 residues: Potassium channel subfamily K member 13 (405 aa).

Residues 1 to 19 (MAGRGCGCSPGHLNEDNAR) are Cytoplasmic-facing. The helical transmembrane segment at 20–40 (FLLLAGLILLYLLGGAAVFSA) threads the bilayer. Asn59 and Asn65 each carry an N-linked (GlcNAc...) asparagine glycan. Residues 95–115 (WDFTGAFYFVGTVVSTIGFGM) constitute an intramembrane region (pore-forming). K(+) is bound by residues Thr110, Ile111, and Gly112. Residues 110–115 (TIGFGM) form a selectivity filter 1 region. The chain crosses the membrane as a helical span at residues 125-145 (IFLIFYGLIGCASTILFFNLF). At 146–193 (LERLITVIACVMRSCHQQQLRRRGAVTQDNMKAPEKGEADSLTGWKPS) the chain is on the cytoplasmic side. Residues 194–214 (VYYVMLILCLASVAISCGASA) form a helical membrane-spanning segment. Positions 224 to 244 (YFDSVYFCFVAFSTIGFGDLV) form an intramembrane region, pore-forming. 4 residues coordinate K(+): Thr237, Ile238, Gly239, and Phe240. A selectivity filter 2 region spans residues 237–242 (TIGFGD). The chain crosses the membrane as a helical span at residues 263–283 (FLILMGVCCIYSLFNVISILI). The Cytoplasmic portion of the chain corresponds to 284 to 405 (KQTVNWILRK…NRLAETSGDR (122 aa)).

Belongs to the two pore domain potassium channel (TC 1.A.1.8) family. As to quaternary structure, homodimer. Heterodimer with KCNK12.

It is found in the cell membrane. The enzyme catalyses K(+)(in) = K(+)(out). K(+) channel that conducts outward rectifying tonic currents potentiated by purinergic signals. Homo- and heterodimerizes to form functional channels with distinct regulatory and gating properties. Contributes most of K(+) currents at the plasma membrane of resting microglia. Maintains a depolarized membrane potential required for proper ramified microglia morphology and phagocytosis, selectively mediating microglial pruning of presynaptic compartments at hippocampal excitatory synapses. Upon local release of ATP caused by neuronal injury or infection, it is potentiated by P2RY12 and P2RX7 receptor signaling and contributes to ATP-triggered K(+) efflux underlying microglial NLRP3 inflammasome assembly and IL1B release. The polypeptide is Potassium channel subfamily K member 13 (Mus musculus (Mouse)).